Reading from the N-terminus, the 439-residue chain is Serine hydroxymethyltransferase (439 aa).

(6S)-5,6,7,8-tetrahydrofolate is bound by residues leucine 119 and 123–125 (GHL). Residue lysine 228 is modified to N6-(pyridoxal phosphate)lysine. 370–372 (SPF) is a (6S)-5,6,7,8-tetrahydrofolate binding site.

This sequence belongs to the SHMT family. Homodimer. It depends on pyridoxal 5'-phosphate as a cofactor.

The protein resides in the cytoplasm. It carries out the reaction (6R)-5,10-methylene-5,6,7,8-tetrahydrofolate + glycine + H2O = (6S)-5,6,7,8-tetrahydrofolate + L-serine. The protein operates within one-carbon metabolism; tetrahydrofolate interconversion. It functions in the pathway amino-acid biosynthesis; glycine biosynthesis; glycine from L-serine: step 1/1. Functionally, catalyzes the reversible interconversion of serine and glycine with tetrahydrofolate (THF) serving as the one-carbon carrier. This reaction serves as the major source of one-carbon groups required for the biosynthesis of purines, thymidylate, methionine, and other important biomolecules. Also exhibits THF-independent aldolase activity toward beta-hydroxyamino acids, producing glycine and aldehydes, via a retro-aldol mechanism. In Chlorobium phaeobacteroides (strain BS1), this protein is Serine hydroxymethyltransferase.